Reading from the N-terminus, the 492-residue chain is Coagulation factor X (492 aa).

A signal peptide spans 1 to 23; it reads MAGLLHLVLLSTALGGLLRPAGS. The propeptide occupies 24 to 40; sequence VFLPRDQAHRVLQRARR. The region spanning 41-85 is the Gla domain; that stretch reads ANSFLEEVKQGNLERECLEEACSLEEAREVFEDAEQTDEFWSKYK. A 4-carboxyglutamate mark is found at E46, E47, E54, E56, E59, E60, E65, E66, E69, E72, E75, and E79. An intrachain disulfide couples C57 to C62. The EGF-like 1; calcium-binding domain occupies 86–122; it reads DGDQCEGHPCLNQGHCKDGIGDYTCTCAEGFEGKNCE. 11 disulfides stabilise this stretch: C90–C101, C95–C110, C112–C121, C129–C140, C136–C149, C151–C164, C172–C341, C240–C245, C260–C276, C389–C403, and C414–C442. D103 bears the (3R)-3-hydroxyaspartate mark. Residues 125–165 form the EGF-like 2 domain; that stretch reads TREICSLDNGGCDQFCREERSEVRCSCAHGYVLGDDSKSCV. The propeptide at 183–233 is activation peptide; sequence WAIHTSEDALDASELEHYDPADLSPTESSLDLLGLNRTEPSAGEDGSQVVR. At Y200 the chain carries Sulfotyrosine. T208 carries O-linked (GalNAc...) threonine glycosylation. N218 is a glycosylation site (N-linked (GlcNAc...) asparagine). Positions 234–466 constitute a Peptidase S1 domain; it reads IVGGRDCAEG…FLKWIDKIMK (233 aa). Active-site charge relay system residues include H275 and D321. S418 acts as the Charge relay system in catalysis. The segment at 472–492 is disordered; that stretch reads AGSRGHSEAPATWTVPPPLPL. The propeptide at 476 to 492 is may be removed but is not necessary for activation; that stretch reads GHSEAPATWTVPPPLPL. A glycan (O-linked (GalNAc...) threonine) is linked at T485.

This sequence belongs to the peptidase S1 family. As to quaternary structure, the two chains are formed from a single-chain precursor by the excision of two Arg residues and are held together by 1 or more disulfide bonds. Forms a heterodimer with SERPINA5. Interacts (activated) with guianensin, an anticoagulant protein from Simulium guianense saliva. Interacts (activated) with simukunin, an anticoagulant protein from Simulium vittatum saliva. Post-translationally, the vitamin K-dependent, enzymatic carboxylation of some glutamate residues allows the modified protein to bind calcium. In terms of processing, N- and O-glycosylated. Proteolytically cleaved and activated by cathepsin CTSG. The activation peptide is cleaved by factor IXa (in the intrinsic pathway), or by factor VIIa (in the extrinsic pathway). Post-translationally, the iron and 2-oxoglutarate dependent 3-hydroxylation of aspartate and asparagine is (R) stereospecific within EGF domains.

The protein localises to the secreted. The catalysed reaction is Selective cleavage of Arg-|-Thr and then Arg-|-Ile bonds in prothrombin to form thrombin.. Its activity is regulated as follows. Inhibited by SERPINA5. Its function is as follows. Factor Xa is a vitamin K-dependent glycoprotein that converts prothrombin to thrombin in the presence of factor Va, calcium and phospholipid during blood clotting. Factor Xa activates pro-inflammatory and pro-fibrotic signaling pathways in a protease-activated receptor (PAR)-dependent manner. This chain is Coagulation factor X (F10), found in Bos taurus (Bovine).